Here is a 1780-residue protein sequence, read N- to C-terminus: Protein TIC 214 (1780 aa).

6 helical membrane passes run 19 to 39 (IINSVVVVGLYYGFLTTFSIG), 68 to 88 (FIAGQLMMFISIYYAPLHLAL), 91 to 111 (PHTITVLALPYLLFHFFWNNN), 133 to 153 (VFLNNLIFQLFNHFILPSSML), 176 to 196 (VGWLIGHILFMKWVGLVLVWI), and 227 to 247 (IFSILLFITCVYYLGRTPSPI). Positions 251–275 (KLKGTSETEERGGTKQDQEVSTEEA) are disordered. Residues 254 to 268 (GTSETEERGGTKQDQ) are compositionally biased toward basic and acidic residues.

The protein belongs to the TIC214 family. Part of the Tic complex.

The protein localises to the plastid. It localises to the chloroplast inner membrane. Involved in protein precursor import into chloroplasts. May be part of an intermediate translocation complex acting as a protein-conducting channel at the inner envelope. The protein is Protein TIC 214 of Draba nemorosa (Woodland whitlowgrass).